The chain runs to 750 residues: MSTTIIGFPRLGEFRELKFTTEKYFRHEISAEELLAAAKELRAKHWNIVKEKGISEIPSNDFSHYDNVLDAAFLFNVVPSSVQGLELTDLERYFALARGYQGEKGDVRALPMKKWFNTNYHYIVPKFEKETQVKLAGHKIFDEFAEAKELGLVTRPVVVGPFTLLQVSDFEDGVAPADFVDALVVAYQEVFAKLAELGAERIQLDEPSLVKDLSAEEKALFLDLYKKLLADKKGLEVLVQTYFGDVRDIYADLVQLPVDAIGLDFVEGKKTLELVKGGFPADKTLYAGIVNGKNIWRNNYEKSLAVLEQIPAENIVLTSSCSLLHVPFTTANEEFEPAILNHFAFAVEKLDEIRDLDAIRNGGGAEALAANKELFATERVGENAELRARIAGLTDADYTRLPVFAEREEIQHKTLNLPPLPTTTIGSFPQTKEVRAKRLAFRKGELSQEDYDKFLAEQIDEWIKWQEEVGFDVLVHGEFERNDMVEYFGQNLSGYLFSKNGWVQSYGMRGVKPPIIWGDVTRLNPITVKWSSYAQSRTDKPVKGMLTGPVTILNWSFPREDISIKDSTLQIALAIKDEVLDLEAAGVKIIQIDEAALREKLPLRRSDWYEDYLDWAIPAFRLVHSTVAPDTQIHTHMCYSEFTDIIPAIDNMDADVISFEASRSNLEILDELKAKNFQTEVGPGVYDIHSPRVPNEGEIDHTIEAILAKVPSKKVWINPDCGLKTRGIPETKASLVRLVEAAKAARQHLK.

5-methyltetrahydropteroyltri-L-glutamate is bound by residues 15 to 18 (RELK) and K114. L-homocysteine-binding positions include 425-427 (IGS) and E478. Residues 425-427 (IGS) and E478 each bind L-methionine. W555 is a binding site for 5-methyltetrahydropteroyltri-L-glutamate. D593 lines the L-homocysteine pocket. Position 593 (D593) interacts with L-methionine. E599 contacts 5-methyltetrahydropteroyltri-L-glutamate. Zn(2+)-binding residues include H636, C638, and E660. H689 serves as the catalytic Proton donor. C721 is a binding site for Zn(2+).

This sequence belongs to the vitamin-B12 independent methionine synthase family. Zn(2+) serves as cofactor.

It carries out the reaction 5-methyltetrahydropteroyltri-L-glutamate + L-homocysteine = tetrahydropteroyltri-L-glutamate + L-methionine. The protein operates within amino-acid biosynthesis; L-methionine biosynthesis via de novo pathway; L-methionine from L-homocysteine (MetE route): step 1/1. Functionally, catalyzes the transfer of a methyl group from 5-methyltetrahydrofolate to homocysteine resulting in methionine formation. This chain is 5-methyltetrahydropteroyltriglutamate--homocysteine methyltransferase, found in Streptococcus sanguinis (strain SK36).